The sequence spans 624 residues: 1-deoxy-D-xylulose-5-phosphate synthase (624 aa).

Thiamine diphosphate is bound by residues His-74 and 115–117 (GHS). Asp-146 serves as a coordination point for Mg(2+). Residues 147–148 (GA), Asn-175, Tyr-286, and Glu-367 each bind thiamine diphosphate. Asn-175 serves as a coordination point for Mg(2+).

Belongs to the transketolase family. DXPS subfamily. Homodimer. Mg(2+) is required as a cofactor. Thiamine diphosphate serves as cofactor.

It catalyses the reaction D-glyceraldehyde 3-phosphate + pyruvate + H(+) = 1-deoxy-D-xylulose 5-phosphate + CO2. It participates in metabolic intermediate biosynthesis; 1-deoxy-D-xylulose 5-phosphate biosynthesis; 1-deoxy-D-xylulose 5-phosphate from D-glyceraldehyde 3-phosphate and pyruvate: step 1/1. In terms of biological role, catalyzes the acyloin condensation reaction between C atoms 2 and 3 of pyruvate and glyceraldehyde 3-phosphate to yield 1-deoxy-D-xylulose-5-phosphate (DXP). The sequence is that of 1-deoxy-D-xylulose-5-phosphate synthase from Alkaliphilus oremlandii (strain OhILAs) (Clostridium oremlandii (strain OhILAs)).